The primary structure comprises 155 residues: V-type proton ATPase 16 kDa proteolipid subunit c (155 aa).

Topologically, residues 1-10 (MSESKSGPEY) are lumenal. A helical membrane pass occupies residues 11-33 (ASFFAVMGASAAMVFSALGAAYG). The Cytoplasmic segment spans residues 34–55 (TAKSGTGIAAMSVMRPEQIMKS). A helical membrane pass occupies residues 56-76 (IIPVVMAGIIAIYGLVVAVLI). Topologically, residues 77–92 (ANSLNDDISLYKSFLQ) are lumenal. Residues 93-114 (LGAGLSVGLSGLAAGFAIGIVG) traverse the membrane as a helical segment. Topologically, residues 115–131 (DAGVRGTAQQPRLFVGM) are cytoplasmic. Residues 132–152 (ILILIFAEVLGLYGLIVALIL) form a helical membrane-spanning segment. At 153–155 (STK) the chain is on the lumenal side.

The protein belongs to the V-ATPase proteolipid subunit family. As to quaternary structure, V-ATPase is a heteromultimeric enzyme made up of two complexes: the ATP-hydrolytic V1 complex and the proton translocation V0 complex. The V1 complex consists of three catalytic AB heterodimers that form a heterohexamer, three peripheral stalks each consisting of EG heterodimers, one central rotor including subunits D and F, and the regulatory subunits C and H. The proton translocation complex V0 consists of the proton transport subunit a, a ring of proteolipid subunits c9c'', rotary subunit d, subunits e and f, and the accessory subunits ATP6AP1/Ac45 and ATP6AP2/PRR. Interacts with the V0 complex V-ATPase subunit a4 ATP6V0A4. Interacts with LASS2. Interacts with RNF182; this interaction leads to ubiquitination and degradation via the proteasome pathway. In terms of assembly, (Microbial infection) Interacts with HTLV-1 accessory protein p12I. Post-translationally, ubiquitinated by RNF182, leading to its degradation via the ubiquitin-proteasome pathway.

The protein resides in the cytoplasmic vesicle. The protein localises to the clathrin-coated vesicle membrane. Its subcellular location is the secretory vesicle. It is found in the synaptic vesicle membrane. Proton-conducting pore forming subunit of the V0 complex of vacuolar(H+)-ATPase (V-ATPase), a multisubunit enzyme composed of a peripheral complex (V1) that hydrolyzes ATP and a membrane integral complex (V0) that translocates protons. V-ATPase is responsible for acidifying and maintaining the pH of intracellular compartments, and in some cell types, it is targeted to the plasma membrane, where it is responsible for acidifying the extracellular environment. The polypeptide is V-type proton ATPase 16 kDa proteolipid subunit c (ATP6V0C) (Homo sapiens (Human)).